We begin with the raw amino-acid sequence, 141 residues long: Nucleoside diphosphate kinase (141 aa).

Residues K11, F59, R87, T93, R104, and N114 each coordinate ATP. H117 acts as the Pros-phosphohistidine intermediate in catalysis.

The protein belongs to the NDK family. Homotetramer. Mg(2+) is required as a cofactor.

Its subcellular location is the cytoplasm. It catalyses the reaction a 2'-deoxyribonucleoside 5'-diphosphate + ATP = a 2'-deoxyribonucleoside 5'-triphosphate + ADP. The enzyme catalyses a ribonucleoside 5'-diphosphate + ATP = a ribonucleoside 5'-triphosphate + ADP. Functionally, major role in the synthesis of nucleoside triphosphates other than ATP. The ATP gamma phosphate is transferred to the NDP beta phosphate via a ping-pong mechanism, using a phosphorylated active-site intermediate. The polypeptide is Nucleoside diphosphate kinase (Cupriavidus metallidurans (strain ATCC 43123 / DSM 2839 / NBRC 102507 / CH34) (Ralstonia metallidurans)).